The chain runs to 398 residues: Queuine tRNA-ribosyltransferase (398 aa).

The Proton acceptor role is filled by D102. Substrate-binding positions include 102–106 (DSGGF), D156, Q205, and G232. The RNA binding stretch occupies residues 263 to 269 (GVGTPED). D282 acts as the Nucleophile in catalysis. The tract at residues 287 to 291 (TRNAR) is RNA binding; important for wobble base 34 recognition. C320, C322, C325, and H362 together coordinate Zn(2+).

Belongs to the queuine tRNA-ribosyltransferase family. In terms of assembly, homodimer. Within each dimer, one monomer is responsible for RNA recognition and catalysis, while the other monomer binds to the replacement base PreQ1. It depends on Zn(2+) as a cofactor.

It carries out the reaction 7-aminomethyl-7-carbaguanine + guanosine(34) in tRNA = 7-aminomethyl-7-carbaguanosine(34) in tRNA + guanine. The protein operates within tRNA modification; tRNA-queuosine biosynthesis. Its function is as follows. Catalyzes the base-exchange of a guanine (G) residue with the queuine precursor 7-aminomethyl-7-deazaguanine (PreQ1) at position 34 (anticodon wobble position) in tRNAs with GU(N) anticodons (tRNA-Asp, -Asn, -His and -Tyr). Catalysis occurs through a double-displacement mechanism. The nucleophile active site attacks the C1' of nucleotide 34 to detach the guanine base from the RNA, forming a covalent enzyme-RNA intermediate. The proton acceptor active site deprotonates the incoming PreQ1, allowing a nucleophilic attack on the C1' of the ribose to form the product. After dissociation, two additional enzymatic reactions on the tRNA convert PreQ1 to queuine (Q), resulting in the hypermodified nucleoside queuosine (7-(((4,5-cis-dihydroxy-2-cyclopenten-1-yl)amino)methyl)-7-deazaguanosine). This chain is Queuine tRNA-ribosyltransferase, found in Polaromonas sp. (strain JS666 / ATCC BAA-500).